The primary structure comprises 439 residues: Sequestosome-1 (439 aa).

Ala2 bears the N-acetylalanine mark. The interaction with LCK stretch occupies residues 2–48 (ASLTVKAYLLGKEEAAREIRRFSFCFSPEPEAEAAAGPGPCERLLSR). The PB1 domain occupies 3–100 (SLTVKAYLLG…DIFRIYIKEK (98 aa)). Ser24 is subject to Phosphoserine. Residues 41-105 (PCERLLSRVA…YIKEKKECRR (65 aa)) form an interaction with PRKCZ and dimerization region. The segment at 48–78 (RVAVLFPALRPGGFQAHYRDEDGDLVAFSSD) is interaction with PAWR. Positions 119 to 221 (VHPNVICDGC…DGRPCPTAES (103 aa)) are interaction with GABRR3. The segment at 120 to 170 (HPNVICDGCNGPVVGTRYKCSVCPDYDLCSVCEGKGLHREHSKLIFPNPFG) adopts a ZZ-type zinc-finger fold. Cys125, Cys128, Cys139, and Cys142 together coordinate Zn(2+). Tyr145 carries the post-translational modification Phosphotyrosine. Zn(2+) is bound by residues Cys148, Cys151, His157, and His160. The segment at 167–217 (NPFGHLSDSFSHSRWLRKLKHGHFGWPGWEMGPPGNWSPRPPRAGDGRPCP) is LIM protein-binding. Phosphoserine occurs at positions 173, 175, and 204. Residues 201–231 (GNWSPRPPRAGDGRPCPTAESASAPSEDPNV) form a disordered region. The TRAF6-binding motif lies at 225-230 (PSEDPN). 2 positions are modified to phosphoserine: Ser246 and Ser263. Residues 259-389 (GGKRSRLTPT…ALYPHLPPEA (131 aa)) are disordered. Positions 265-292 (LTPTSAESSSTGTEDKSGTQPSSCSSEV) are enriched in polar residues. Residue Thr266 is modified to Phosphothreonine. The tract at residues 266 to 439 (TPTSAESSST…IQYSKHPPPL (174 aa)) is interaction with NTRK1. Phosphoserine is present on residues Ser269 and Ser281. Cys288 carries S-palmitoyl cysteine lipidation. Residues Ser305, Ser327, and Ser331 each carry the phosphoserine modification. An MAP1LC3B-binding region spans residues 320–341 (QPEELMESDNCSGGDDDWTHLS). The LIR motif lies at 335–340 (DDWTHL). The segment covering 336–346 (DWTHLSSKEVD) has biased composition (basic and acidic residues). An interaction with KEAP1 region spans residues 346-351 (DPSTGE). 5 positions are modified to phosphoserine: Ser348, Ser354, Ser360, Ser364, and Ser365. Residues 350 to 372 (GELQSLQMPESEGPSSLDPSQEG) are compositionally biased toward polar residues. Residues 388 to 433 (EADPRLIESLSQMLSMGFSDEGGWLTRLLQTKNYDIGAALDTIQYS) enclose the UBA domain. Position 402 is a phosphoserine; by ULK1 and TBK1 (Ser402). A Phosphoserine modification is found at Ser406. N6-acetyllysine; alternate occurs at positions 419 and 434. Residue Lys419 forms a Glycyl lysine isopeptide (Lys-Gly) (interchain with G-Cter in ubiquitin); alternate linkage. Lys434 is covalently cross-linked (Glycyl lysine isopeptide (Lys-Gly) (interchain with G-Cter in SUMO2); alternate).

In terms of assembly, homooligomer or heterooligomer; may form homotypic arrays. Dimerization interferes with ubiquitin binding. Component of a ternary complex with PAWR and PRKCZ. Forms a complex with JUB/Ajuba, PRKCZ and TRAF6. Identified in a complex with TRAF6 and CYLD. Identified in a heterotrimeric complex with ubiquitin and ZFAND5, where ZFAND5 and SQSTM1 both interact with the same ubiquitin molecule. Interacts (via LIR motif) with MAP1LC3A and MAP1LC3B, as well as with other ATG8 family members, including GABARAP, GABARAPL1 and GABARAPL2; these interactions are necessary for the recruitment MAP1 LC3 family members to inclusion bodies containing polyubiquitinated protein aggregates and for their degradation by autophagy. Interacts directly with PRKCI and PRKCZ. Interacts with EBI3, LCK, RASA1, NR2F2, NTRK1, NTRK2, NTRK3, NBR1, MAP2K5 and MAPKAPK5. Upon TNF-alpha stimulation, interacts with RIPK1 probably bridging IKBKB to the TNF-R1 complex composed of TNF-R1/TNFRSF1A, TRADD and RIPK1. Interacts with the proteasome subunits PSMD4 and PSMC2. Interacts with TRAF6. Interacts with 'Lys-63'-linked polyubiquitinated MAPT/TAU. Interacts with FHOD3. Interacts with CYLD. Interacts with SESN1. Interacts with SESN2. Interacts with ULK1. Interacts with UBD. Interacts with WDR81; the interaction is direct and regulates the interaction of SQSTM1 with ubiquitinated proteins. Interacts with WDFY3; this interaction is required to recruit WDFY3 to cytoplasmic bodies and to PML bodies. Interacts with LRRC25. Interacts with STING1; leading to relocalization of STING1 to autophagosomes. Interacts (when phosphorylated at Ser-348) with KEAP1; the interaction is direct and inactivates the BCR(KEAP1) complex by sequestering KEAP1 in inclusion bodies, promoting its degradation. Interacts with MOAP1; promoting dissociation of SQSTM1 inclusion bodies that sequester KEAP1. Interacts with GBP1. Interacts with TAX1BP1. Interacts with (ubiquitinated) PEX5; specifically binds PEX5 ubiquitinated at 'Lys-209' in response to reactive oxygen species (ROS). Interacts (via PB1 domain) with TNS2; the interaction leads to sequestration of TNS2 in cytoplasmic aggregates with SQSTM1 and promotes TNS2 ubiquitination and proteasomal degradation. Interacts with IRS1; the interaction is disrupted by the presence of tensin TNS2. Interacts with TRIM5. Interacts with TRIM11 (when ubiquitinated); promoting AIM2 recruitment to autophagosomes and autophagy-dependent degradation of AIM2. Interacts with TRIM13. Interacts with TRIM16. Interacts with TRIM23. Interacts with TRIM50. Interacts with TRIM55. Interacts with ECSIT; this interaction inhibits TLR4 signaling via functional regulation of the TRAF6-ECSIT complex. Interacts with GABRR1, GABRR2 and GABRR3. Interacts with WDR83. Interacts with GRB2. Interacts with USP12; the interaction is independent of USP12 deubiquitinase activity and may be involved in regulation of autophagic flux. Interacts with ASB6. In terms of processing, phosphorylated. Phosphorylation at Ser-406 by ULK1 destabilizes the UBA dimer interface and increases binding affinity to ubiquitinated proteins. Phosphorylation at Ser-406 also primes for subsequent phosphorylation at Ser-402. Phosphorylation at Ser-402 by CK2 or ULK1 promotes binding to ubiquitinated proteins by increasing the affinity between the UBA domain and polyubiquitin chains. Phosphorylation at Ser-402 by ULK1 is stimulated by SESN2. Phosphorylated at Ser-402 by TBK1, leading to promote relocalization of 'Lys-63'-linked ubiquitinated STING1 to autophagosomes. Phosphorylation at Ser-348 by ULK1 promotes interaction with KEAP1 and inactivation of the BCR(KEAP1) complex, promoting NFE2L2/NRF2 nuclear accumulation and expression of phase II detoxifying enzymes. Phosphorylated in vitro by TTN. Ubiquitinated by UBE2J1 and RNF26 at Lys-434: ubiquitinated SQSTM1 attracts specific vesicle-associated adapters, forming a molecular bridge that restrains cognate vesicles in the perinuclear region and organizes the endosomal pathway for efficient cargo transport. Ubiquitination by UBE2D2 and UBE2D3 increases its ability to bind polyubiquitin chains by destabilizing the UBA dimer interface. Deubiquitination by USP15 releases target vesicles for fast transport into the cell periphery. Ubiquitinated by the BCR(KEAP1) complex at Lys-419, increasing SQSTM1 sequestering activity and promoting its degradation. Ubiquitinated via 'Lys-29' and 'Lys-33'-linked polyubiquitination leading to xenophagic targeting of bacteria and inhibition of their replication. Post-translationally, acetylated at Lys-419 and Lys-434 by KAT5/TIP60, promotes activity by destabilizing the UBA dimer interface and increases binding affinity to ubiquitinated proteins. Deacetylated by HDAC6. In terms of processing, palmitoylation at Cys-288 by ZDHHC19 is required for efficient autophagic degradation of SQSTM1-cargo complexes by promoting affinity for ATG8 proteins and recruitment of p62 bodies to autophagosomes. Dealmitoylated at Cys-288 by LYPLA1. As to expression, ubiquitously expressed. In brain, mainly expressed by neurons, especially pyramidal neurons in the cerebral cortex and hippocampus. Also expressed by Purkinje cells and neurons in the dentate nucleus of the cerebellum and neurons of the basal ganglia (at protein level).

The protein resides in the cytoplasmic vesicle. It localises to the autophagosome. It is found in the preautophagosomal structure. Its subcellular location is the cytoplasm. The protein localises to the cytosol. The protein resides in the nucleus. It localises to the PML body. It is found in the late endosome. Its subcellular location is the lysosome. The protein localises to the endoplasmic reticulum. The protein resides in the myofibril. It localises to the sarcomere. Molecular adapter required for selective macroautophagy (aggrephagy) by acting as a bridge between polyubiquitinated proteins and autophagosomes. Promotes the recruitment of ubiquitinated cargo proteins to autophagosomes via multiple domains that bridge proteins and organelles in different steps. SQSTM1 first mediates the assembly and removal of ubiquitinated proteins by undergoing liquid-liquid phase separation upon binding to ubiquitinated proteins via its UBA domain, leading to the formation of insoluble cytoplasmic inclusions, known as p62 bodies. SQSTM1 then interacts with ATG8 family proteins on autophagosomes via its LIR motif, leading to p62 body recruitment to autophagosomes, followed by autophagic clearance of ubiquitinated proteins. SQSTM1 is itself degraded along with its ubiquitinated cargos. Also required to recruit ubiquitinated proteins to PML bodies in the nucleus. Also involved in autophagy of peroxisomes (pexophagy) in response to reactive oxygen species (ROS) by acting as a bridge between ubiquitinated PEX5 receptor and autophagosomes. Acts as an activator of the NFE2L2/NRF2 pathway via interaction with KEAP1: interaction inactivates the BCR(KEAP1) complex by sequestering the complex in inclusion bodies, promoting nuclear accumulation of NFE2L2/NRF2 and subsequent expression of cytoprotective genes. Promotes relocalization of 'Lys-63'-linked ubiquitinated STING1 to autophagosomes. Involved in endosome organization by retaining vesicles in the perinuclear cloud: following ubiquitination by RNF26, attracts specific vesicle-associated adapters, forming a molecular bridge that restrains cognate vesicles in the perinuclear region and organizes the endosomal pathway for efficient cargo transport. Sequesters tensin TNS2 into cytoplasmic puncta, promoting TNS2 ubiquitination and proteasomal degradation. May regulate the activation of NFKB1 by TNF-alpha, nerve growth factor (NGF) and interleukin-1. May play a role in titin/TTN downstream signaling in muscle cells. Adapter that mediates the interaction between TRAF6 and CYLD. In terms of biological role, more potent than isoform 2 to stimulate PRKCZ-dependent phosphorylation of KCNAB2. The chain is Sequestosome-1 (Sqstm1) from Rattus norvegicus (Rat).